Here is a 79-residue protein sequence, read N- to C-terminus: Conotoxin Cl9.4 (79 aa).

An N-terminal signal peptide occupies residues 1–23; that stretch reads MNCYLILTVALLLTSAMTGTTTA. The propeptide occupies 24–37; sequence GQLNKKGVTLREDD. Cystine bridges form between Cys-41-Cys-58, Cys-46-Cys-68, and Cys-48-Cys-73.

As to expression, expressed by the venom duct.

It is found in the secreted. The chain is Conotoxin Cl9.4 from Californiconus californicus (California cone).